We begin with the raw amino-acid sequence, 298 residues long: MSYKSGFVSIVGRPNVGKSTLLNQVVGTKIAIMSDKPQTTRNKIRAVLTSEKGQIIFIDTPGVQKPRNKLGEFMLKQALTSLDEVDVLLYVVEANSPIGPQENYLLKTLAEVKTPIILVVNKIDVVKMIEAQTLARQIESRLKVAKTYYISALNGTGVSELVEGIFELLPEGPPYYPEGQVTDYPERFIIAEYIREQILHLTREEIPHSVAVVVEEIKPRENSNTVYVSAVIYVERESQKGIIIGKNGQMLKEIGQRARLEIERLLGSNIYLDLWVKVKEDWRNKDVWIRNFGFTEFE.

In terms of domain architecture, Era-type G spans 4–171 (KSGFVSIVGR…VEGIFELLPE (168 aa)). Residues 12-19 (GRPNVGKS) form a G1 region. A GTP-binding site is contributed by 12–19 (GRPNVGKS). Residues 38–42 (QTTRN) are G2. The segment at 59 to 62 (DTPG) is G3. Residues 59 to 63 (DTPGV) and 121 to 124 (NKID) each bind GTP. The interval 121–124 (NKID) is G4. The segment at 150–152 (ISA) is G5. A KH type-2 domain is found at 202-280 (TREEIPHSVA…YLDLWVKVKE (79 aa)).

Belongs to the TRAFAC class TrmE-Era-EngA-EngB-Septin-like GTPase superfamily. Era GTPase family. In terms of assembly, monomer.

It localises to the cytoplasm. Its subcellular location is the cell membrane. Functionally, an essential GTPase that binds both GDP and GTP, with rapid nucleotide exchange. Plays a role in 16S rRNA processing and 30S ribosomal subunit biogenesis and possibly also in cell cycle regulation and energy metabolism. The polypeptide is GTPase Era (Carboxydothermus hydrogenoformans (strain ATCC BAA-161 / DSM 6008 / Z-2901)).